The primary structure comprises 804 residues: MERQGAPLGPYRATKLWNEVTTSFRVGMPLRKHRQHLKKYSNCFTAVEAIDWLYDLLRSNSNFGPEVTRQQTIQLLRKFLKNHVIEDIKGRWGSESLDDNNQLFRFPATSPLKTFPQRHTEIKKTNTEYFSKDKDGIFKLRNLSQKTSKKRGLHFSQENTEKINHERITNEDLEIAPDNQEISQEDVEEVWRYVIMIYLQTILSLPSIEELLNPNQVIPQYIMYNMANTSKHGVVILQDKSDDLPHWVLSAMKCLANWPRSNDTNNLTYVGFERDVFKTIADYFLNLPEPLLTFEYYELFVNILVVCGYITVSDRTSGIHKIQDDPRSSKIHDLSNLNSFKSTECLLLSLLYKDKSNEELDSTKRLQRNDQGFQERCAKKMQLDNLRNRRASANDIMGGSCHNLIGLSNTNALSSNIKPRCSSLEGIVDRPVNSSEKKSSIFYQSVLNIEEQNSKQSLVSAPKQTPLFNLHSDENAQQPHCVGFNRTSALTVQDQEELCNEKYKSKQLCRSQSLLLRSSTRQNSCINKPVAEIIMKPNVGQGSTSELGESSTTINKRLCKSTIELSEKSLPPAASVLTGTQSLLQPHLERVAINALQLCCLLLPPPNRRKLQLLMRMISRMSQNVDMPKLHEQIGTRSLMINTFSRCVLCCAEEVDLDELLASRLVSFLMDHHQEILQVPTYLQAAVEKHLDYIKKGNVKNHGDGLVVPLPTYSYCKQISAKEFDEQKISTSQAAIAELLENIVRSKSLSLKEKRRKLKQKEYPLIYQKRFPTTESEAALFDDKPTIKQPMLNLRNPKLHSLRY.

The region spanning 24 to 108 (FRVGMPLRKH…DNNQLFRFPA (85 aa)) is the DEP domain. One can recognise a Rho-GAP domain in the interval 282–322 (DYFLNLPEPLLTFEYYELFVNILVVCGYITVSDRTSGIHKI). Position 513 is a phosphoserine (serine 513). The interval 592 to 647 (AINALQLCCLLLPPPNRRKLQLLMRMISRMSQNVDMPKLHEQIGTRSLMINTFSRC) is interaction with ZNF224. The stretch at 726 to 760 (EQKISTSQAAIAELLENIVRSKSLSLKEKRRKLKQ) forms a coiled coil.

Can form dimers. Interacts with ZNF224.

The protein resides in the nucleus. In terms of biological role, may be involved in transcriptional regulation as a transcriptional corepressor. The DEPDC1A-ZNF224 complex may play a critical role in bladder carcinogenesis by repressing the transcription of the A20 gene, leading to transport of NF-KB protein into the nucleus, resulting in suppression of apoptosis of bladder cancer cells. This chain is DEP domain-containing protein 1A (Depdc1a), found in Mus musculus (Mouse).